The following is a 313-amino-acid chain: Glutathione S-transferase omega-like 2 (313 aa).

Catalysis depends on Cys-49, which acts as the Nucleophile. The region spanning 161 to 289 is the GST C-terminal domain; it reads PSSLRTKIDE…TDFKHIKCHY (129 aa).

The protein belongs to the GST superfamily. Omega family.

Its subcellular location is the cytoplasm. The protein resides in the nucleus. The protein localises to the golgi apparatus. The enzyme catalyses RX + glutathione = an S-substituted glutathione + a halide anion + H(+). It carries out the reaction L-dehydroascorbate + 2 glutathione = glutathione disulfide + L-ascorbate. Functionally, active as '1-Cys' thiol transferase against beta-hydroxyethyl disulfide (HED), as dehydroascorbate reductase and as dimethylarsinic acid reductase, while not active against the standard GST substrate 1-chloro-2,4-dinitrobenzene (CDNB). May be involved in cell wall organization and biogenesis. The sequence is that of Glutathione S-transferase omega-like 2 (gto2) from Schizosaccharomyces pombe (strain 972 / ATCC 24843) (Fission yeast).